Consider the following 182-residue polypeptide: Inner membrane-spanning protein YciB (182 aa).

The next 5 helical transmembrane spans lie at isoleucine 22–alanine 42, methionine 50–aspartate 70, alanine 72–serine 92, valine 118–phenylalanine 138, and phenylalanine 148–leucine 168.

The protein belongs to the YciB family.

Its subcellular location is the cell inner membrane. Functionally, plays a role in cell envelope biogenesis, maintenance of cell envelope integrity and membrane homeostasis. The chain is Inner membrane-spanning protein YciB from Shewanella woodyi (strain ATCC 51908 / MS32).